A 1377-amino-acid chain; its full sequence is Zinc finger MYM-type protein 2 (1377 aa).

Glycyl lysine isopeptide (Lys-Gly) (interchain with G-Cter in SUMO2) cross-links involve residues K48, K88, K98, and K104. 2 stretches are compositionally biased toward polar residues: residues 85 to 115 (TSSKNEELQGNDSKITPSSKELASQKGSVSE) and 127 to 138 (TNQGQEKNSSNF). The tract at residues 85-177 (TSSKNEELQG…GMGNSGITTE (93 aa)) is disordered. Over residues 139-152 (IERRPPETKNRTND) the composition is skewed to basic and acidic residues. A Glycyl lysine isopeptide (Lys-Gly) (interchain with G-Cter in SUMO2) cross-link involves residue K147. Polar residues predominate over residues 153 to 164 (VDFSTSSFSRSK). Phosphoserine is present on S159. Residues K253 and K297 each participate in a glycyl lysine isopeptide (Lys-Gly) (interchain with G-Cter in SUMO2) cross-link. The disordered stretch occupies residues 273 to 305 (NGESATHHNPDSWISQSASFPRNQKQPGVDSLS). Polar residues predominate over residues 284 to 298 (SWISQSASFPRNQKQ). Position 305 is a phosphoserine (S305). Glycyl lysine isopeptide (Lys-Gly) (interchain with G-Cter in SUMO2) cross-links involve residues K312, K325, K348, and K366. The segment at 327-363 (VKVTCANCKKPLQKGQTAYQRKGSAHLFCSTTCLSSF) adopts an MYM-type 1 zinc-finger fold. Residues 369-409 (PKKLCVMCKKDITTMKGTIVAQVDSSESFQEFCSTSCLSLY) form an MYM-type 2 zinc finger. Residues K417, K441, K491, K503, K513, K529, and K532 each participate in a glycyl lysine isopeptide (Lys-Gly) (interchain with G-Cter in SUMO2) cross-link. 2 MYM-type zinc fingers span residues 421–456 (NKSRCTICGKLTEIRHEVSFKNMTHKLCSDHCFNRY) and 463–502 (IMNCCEQCGEYLPSKGAGNNVLVIDGQQKRFCCQSCVSEY). The MYM-type 5 zinc finger occupies 533–570 (LTTCTGCRTQCRFFDMTQCIGPNGYMEPYCSTACMNSH). Residues K576, K603, K649, K658, K688, K700, and K709 each participate in a glycyl lysine isopeptide (Lys-Gly) (interchain with G-Cter in SUMO2) cross-link. The segment at 636 to 671 (QLKCNYCKNSFCSKPEILEWENKVHQFCSKTCSDDY) adopts an MYM-type 6 zinc-finger fold. 2 consecutive MYM-type zinc fingers follow at residues 723-758 (RCVTCNYCSQLCKKGATKELDGVVRDFCSEDCCKKF) and 764-799 (KAARCDCCKSQGTLKERVQWRGEMKHFCDQHCLLRF). Glycyl lysine isopeptide (Lys-Gly) (interchain with G-Cter in SUMO2) cross-links involve residues K764, K788, K812, and K829. 2 positions are modified to phosphoserine: S838 and S958. Disordered stretches follow at residues 983–1002 (LLKNSDPETQSSMPDVPYEP) and 1028–1064 (VFGEEYEEQPRPRSKKKGAKRKAVSGYQSHDDSSDNS). A compositionally biased stretch (basic residues) spans 1039 to 1050 (PRSKKKGAKRKA). At S1064 the chain carries Phosphoserine. A Phosphothreonine modification is found at T1376.

In terms of assembly, can form homodimers. May be a component of a BHC histone deacetylase complex that contains HDAC1, HDAC2, HMG20B/BRAF35, KDM1A, RCOR1/CoREST, PHF21A/BHC80, ZMYM2, ZNF217, ZMYM3, GSE1 and GTF2I. Interacts with FOXP1 and FOXP2.

The protein resides in the nucleus. Its function is as follows. Involved in the negative regulation of transcription. The polypeptide is Zinc finger MYM-type protein 2 (ZMYM2) (Homo sapiens (Human)).